We begin with the raw amino-acid sequence, 247 residues long: Type III pantothenate kinase (247 aa).

An ATP-binding site is contributed by 6-13; it reads DVGNTHTT. 101–104 contributes to the substrate binding site; that stretch reads GADR. D103 acts as the Proton acceptor in catalysis. D123 contributes to the K(+) binding site. T126 is an ATP binding site. T177 provides a ligand contact to substrate.

The protein belongs to the type III pantothenate kinase family. Homodimer. NH4(+) serves as cofactor. The cofactor is K(+).

It localises to the cytoplasm. It carries out the reaction (R)-pantothenate + ATP = (R)-4'-phosphopantothenate + ADP + H(+). It participates in cofactor biosynthesis; coenzyme A biosynthesis; CoA from (R)-pantothenate: step 1/5. Its function is as follows. Catalyzes the phosphorylation of pantothenate (Pan), the first step in CoA biosynthesis. The polypeptide is Type III pantothenate kinase (Thermosipho melanesiensis (strain DSM 12029 / CIP 104789 / BI429)).